Reading from the N-terminus, the 919-residue chain is Bifunctional uridylyltransferase/uridylyl-removing enzyme (919 aa).

Residues 1–373 (MTDPKVPRQR…LAGFNAKSRM (373 aa)) are uridylyltransferase. The interval 374 to 727 (LKGYTVFGGK…CEFDEERGAT (354 aa)) is uridylyl-removing. The HD domain occupies 489 to 611 (VDEHTIRAIG…VQSLERLRHL (123 aa)). ACT domains lie at 728–811 (LVTV…LAKR) and 839–919 (VIEV…LEPA).

It belongs to the GlnD family. Mg(2+) is required as a cofactor.

The enzyme catalyses [protein-PII]-L-tyrosine + UTP = [protein-PII]-uridylyl-L-tyrosine + diphosphate. The catalysed reaction is [protein-PII]-uridylyl-L-tyrosine + H2O = [protein-PII]-L-tyrosine + UMP + H(+). Uridylyltransferase (UTase) activity is inhibited by glutamine, while glutamine activates uridylyl-removing (UR) activity. Modifies, by uridylylation and deuridylylation, the PII regulatory proteins (GlnB and homologs), in response to the nitrogen status of the cell that GlnD senses through the glutamine level. Under low glutamine levels, catalyzes the conversion of the PII proteins and UTP to PII-UMP and PPi, while under higher glutamine levels, GlnD hydrolyzes PII-UMP to PII and UMP (deuridylylation). Thus, controls uridylylation state and activity of the PII proteins, and plays an important role in the regulation of nitrogen assimilation and metabolism. The chain is Bifunctional uridylyltransferase/uridylyl-removing enzyme from Erythrobacter litoralis (strain HTCC2594).